A 706-amino-acid chain; its full sequence is Envelope glycoprotein H (706 aa).

Positions 1 to 18 are cleaved as a signal peptide; it reads MQLLCVFCLVLLWEVGAA. At 19 to 682 the chain is on the virion surface side; sequence SLSEVKLHLD…LYEERAHVVL (664 aa). N60 carries an N-linked (GlcNAc...) asparagine; by host glycan. Residues 165-229 form an interaction with gL region; it reads DKFQYTGAMT…QSGDYSLVIV (65 aa). C278 and C335 are disulfide-bonded. N435 is a glycosylation site (N-linked (GlcNAc...) asparagine; by host). Cystine bridges form between C454/C478 and C534/C587. N549 and N604 each carry an N-linked (GlcNAc...) asparagine; by host glycan. C612 and C615 form a disulfide bridge. A glycan (N-linked (GlcNAc...) asparagine; by host) is linked at N664. A helical transmembrane segment spans residues 683–703; that stretch reads AIILYFIAFALGIFLVHKIVM. The Intravirion portion of the chain corresponds to 704–706; sequence FFL.

The protein belongs to the herpesviridae glycoprotein H family. Interacts with glycoprotein L (gL); this interaction is necessary for the correct processing and cell surface expression of gH. The heterodimer gH/gL seems to interact with gB trimers during fusion. The heterodimer gH/gL interacts with host EPHA2 to facilitate virus internalization and fusion. Interacts with glycoprotein 42/BZLF2. Post-translationally, N-glycosylated, O-glycosylated, and sialylated.

It localises to the virion membrane. It is found in the host cell membrane. The protein resides in the host endosome membrane. Its function is as follows. The heterodimer glycoprotein H-glycoprotein L is required for the fusion of viral and plasma membranes leading to virus entry into the host cell. Following initial binding to host receptor, membrane fusion is mediated by the fusion machinery composed of gB and the heterodimer gH/gL. May also be involved in the fusion between the virion envelope and the outer nuclear membrane during virion morphogenesis. The heterodimer gH/gL targets also host EPHA2 to promote viral entry. This is Envelope glycoprotein H from Homo sapiens (Human).